The primary structure comprises 248 residues: Large ribosomal subunit protein uL4 (248 aa).

Disordered regions lie at residues 48 to 95 and 210 to 248; these read GTHK…GPVP and AFSE…RTGA. Positions 233 to 248 are enriched in basic and acidic residues; that stretch reads DATKARSSRHDDRTGA.

The protein belongs to the universal ribosomal protein uL4 family. Part of the 50S ribosomal subunit.

One of the primary rRNA binding proteins, this protein initially binds near the 5'-end of the 23S rRNA. It is important during the early stages of 50S assembly. It makes multiple contacts with different domains of the 23S rRNA in the assembled 50S subunit and ribosome. Its function is as follows. Forms part of the polypeptide exit tunnel. The protein is Large ribosomal subunit protein uL4 of Tropheryma whipplei (strain TW08/27) (Whipple's bacillus).